Here is a 75-residue protein sequence, read N- to C-terminus: UPF0352 protein plu2871 (75 aa).

This sequence belongs to the UPF0352 family.

This chain is UPF0352 protein plu2871, found in Photorhabdus laumondii subsp. laumondii (strain DSM 15139 / CIP 105565 / TT01) (Photorhabdus luminescens subsp. laumondii).